A 300-amino-acid chain; its full sequence is Fructose-bisphosphate aldolase class 1 (300 aa).

Catalysis depends on glutamate 181, which acts as the Proton acceptor. The active-site Schiff-base intermediate with dihydroxyacetone-P is lysine 218.

The protein belongs to the class I fructose-bisphosphate aldolase family.

The enzyme catalyses beta-D-fructose 1,6-bisphosphate = D-glyceraldehyde 3-phosphate + dihydroxyacetone phosphate. The protein operates within carbohydrate degradation; glycolysis; D-glyceraldehyde 3-phosphate and glycerone phosphate from D-glucose: step 4/4. The chain is Fructose-bisphosphate aldolase class 1 (fda) from Synechocystis sp. (strain ATCC 27184 / PCC 6803 / Kazusa).